The chain runs to 253 residues: MPEARRTTIDAGEVERFSALAQEWWNPNGKFRPLHKFNPVRLAYIRDNVAAHFGRDPRAAKPFEGLRILDIGCGGGLLCEPMARLGASVVGADASATNIEVARLHALESGVSIDYRAETAEALADQGEKFDIILNMEVVEHVADIDLFIEKCAEMLKPGGLMFVATINRTLKALGLAIIGAEYVLRWLPRGTHQYGKLVRPDELERALASAGLITKDRTGVVYNPLTDRWNRSRDMDVNYMVLAEKPTAEAMI.

Residues Arg41, Gly72, Asp93, and Met136 each contribute to the S-adenosyl-L-methionine site.

Belongs to the methyltransferase superfamily. UbiG/COQ3 family.

It catalyses the reaction a 3-demethylubiquinol + S-adenosyl-L-methionine = a ubiquinol + S-adenosyl-L-homocysteine + H(+). It carries out the reaction a 3-(all-trans-polyprenyl)benzene-1,2-diol + S-adenosyl-L-methionine = a 2-methoxy-6-(all-trans-polyprenyl)phenol + S-adenosyl-L-homocysteine + H(+). It functions in the pathway cofactor biosynthesis; ubiquinone biosynthesis. Functionally, O-methyltransferase that catalyzes the 2 O-methylation steps in the ubiquinone biosynthetic pathway. The polypeptide is Ubiquinone biosynthesis O-methyltransferase (Chelativorans sp. (strain BNC1)).